Consider the following 34-residue polypeptide: Photosystem II reaction center protein Psb30 (34 aa).

A helical transmembrane segment spans residues 5-25; sequence VLAQLTVLAFVIAVGPITLIW.

Belongs to the Psb30/Ycf12 family. PSII is composed of 1 copy each of membrane proteins PsbA, PsbB, PsbC, PsbD, PsbE, PsbF, PsbH, PsbI, PsbJ, PsbK, PsbL, PsbM, PsbT, PsbX, PsbY, PsbZ, Psb30/Ycf12, peripheral proteins of the oxygen-evolving complex and a large number of cofactors. It forms dimeric complexes.

The protein localises to the plastid. It localises to the chloroplast thylakoid membrane. Its function is as follows. A core subunit of photosystem II (PSII), probably helps stabilize the reaction center. This is Photosystem II reaction center protein Psb30 from Cyanidioschyzon merolae (strain NIES-3377 / 10D) (Unicellular red alga).